A 620-amino-acid chain; its full sequence is Chaperone protein HscA homolog (620 aa).

The protein belongs to the heat shock protein 70 family.

Functionally, chaperone involved in the maturation of iron-sulfur cluster-containing proteins. Has a low intrinsic ATPase activity which is markedly stimulated by HscB. The protein is Chaperone protein HscA homolog of Shewanella oneidensis (strain ATCC 700550 / JCM 31522 / CIP 106686 / LMG 19005 / NCIMB 14063 / MR-1).